A 279-amino-acid polypeptide reads, in one-letter code: Release factor glutamine methyltransferase (279 aa).

S-adenosyl-L-methionine is bound by residues 118–122, Asp141, and Asn182; that span reads GTGSG. 182–185 contacts substrate; that stretch reads NPPY.

The protein belongs to the protein N5-glutamine methyltransferase family. PrmC subfamily.

The catalysed reaction is L-glutaminyl-[peptide chain release factor] + S-adenosyl-L-methionine = N(5)-methyl-L-glutaminyl-[peptide chain release factor] + S-adenosyl-L-homocysteine + H(+). Functionally, methylates the class 1 translation termination release factors RF1/PrfA and RF2/PrfB on the glutamine residue of the universally conserved GGQ motif. In Streptococcus pneumoniae (strain ATCC BAA-255 / R6), this protein is Release factor glutamine methyltransferase.